Here is a 109-residue protein sequence, read N- to C-terminus: Large ribosomal subunit protein uL22 (109 aa).

This sequence belongs to the universal ribosomal protein uL22 family. Part of the 50S ribosomal subunit.

Its function is as follows. This protein binds specifically to 23S rRNA; its binding is stimulated by other ribosomal proteins, e.g. L4, L17, and L20. It is important during the early stages of 50S assembly. It makes multiple contacts with different domains of the 23S rRNA in the assembled 50S subunit and ribosome. The globular domain of the protein is located near the polypeptide exit tunnel on the outside of the subunit, while an extended beta-hairpin is found that lines the wall of the exit tunnel in the center of the 70S ribosome. The protein is Large ribosomal subunit protein uL22 of Aromatoleum aromaticum (strain DSM 19018 / LMG 30748 / EbN1) (Azoarcus sp. (strain EbN1)).